Here is a 1193-residue protein sequence, read N- to C-terminus: DNA-directed RNA polymerase subunit beta (1193 aa).

Residues 1173–1193 (QQAKEAAELEKAKEEALDKTE) form a disordered region. Basic and acidic residues predominate over residues 1177-1193 (EAAELEKAKEEALDKTE).

It belongs to the RNA polymerase beta chain family. In terms of assembly, the RNAP catalytic core consists of 2 alpha, 1 beta, 1 beta' and 1 omega subunit. When a sigma factor is associated with the core the holoenzyme is formed, which can initiate transcription.

The catalysed reaction is RNA(n) + a ribonucleoside 5'-triphosphate = RNA(n+1) + diphosphate. In terms of biological role, DNA-dependent RNA polymerase catalyzes the transcription of DNA into RNA using the four ribonucleoside triphosphates as substrates. The chain is DNA-directed RNA polymerase subunit beta from Streptococcus thermophilus (strain CNRZ 1066).